The chain runs to 214 residues: A-type ATP synthase subunit D (214 aa).

This sequence belongs to the V-ATPase D subunit family. Has multiple subunits with at least A(3), B(3), C, D, E, F, H, I and proteolipid K(x).

The protein resides in the cell membrane. In terms of biological role, component of the A-type ATP synthase that produces ATP from ADP in the presence of a proton gradient across the membrane. The polypeptide is A-type ATP synthase subunit D (Thermococcus sibiricus (strain DSM 12597 / MM 739)).